A 127-amino-acid polypeptide reads, in one-letter code: Glycine cleavage system H protein (127 aa).

A Lipoyl-binding domain is found at 24-105 (TVKVGISDHA…PYEAWLFAVR (82 aa)). Lysine 65 bears the N6-lipoyllysine mark.

Belongs to the GcvH family. In terms of assembly, the glycine cleavage system is composed of four proteins: P, T, L and H. The cofactor is (R)-lipoate.

In terms of biological role, the glycine cleavage system catalyzes the degradation of glycine. The H protein shuttles the methylamine group of glycine from the P protein to the T protein. The protein is Glycine cleavage system H protein of Methylococcus capsulatus (strain ATCC 33009 / NCIMB 11132 / Bath).